Here is a 152-residue protein sequence, read N- to C-terminus: Transcriptional regulator MraZ (152 aa).

2 consecutive SpoVT-AbrB domains span residues 5-52 (ASAI…PLHE) and 81-124 (AHEV…DEQA).

Belongs to the MraZ family. Forms oligomers.

It localises to the cytoplasm. It is found in the nucleoid. This is Transcriptional regulator MraZ from Shewanella sp. (strain MR-7).